The following is a 450-amino-acid chain: Phosphoglucosamine mutase (450 aa).

Catalysis depends on S101, which acts as the Phosphoserine intermediate. The Mg(2+) site is built by S101, D240, D242, and D244. S101 is modified (phosphoserine).

The protein belongs to the phosphohexose mutase family. Mg(2+) serves as cofactor. Activated by phosphorylation.

The enzyme catalyses alpha-D-glucosamine 1-phosphate = D-glucosamine 6-phosphate. Functionally, catalyzes the conversion of glucosamine-6-phosphate to glucosamine-1-phosphate. This is Phosphoglucosamine mutase from Streptococcus agalactiae serotype Ia (strain ATCC 27591 / A909 / CDC SS700).